We begin with the raw amino-acid sequence, 423 residues long: Deoxyguanosinetriphosphate triphosphohydrolase-like protein (423 aa).

In terms of domain architecture, HD spans arginine 66–serine 216.

This sequence belongs to the dGTPase family. Type 2 subfamily.

This Corynebacterium diphtheriae (strain ATCC 700971 / NCTC 13129 / Biotype gravis) protein is Deoxyguanosinetriphosphate triphosphohydrolase-like protein.